Reading from the N-terminus, the 880-residue chain is Pyruvate, phosphate dikinase (880 aa).

The N-terminal stretch occupies residues 1-348 (MNKLIYYFGN…LYILQTRTAK (348 aa)). Residue R97 participates in ATP binding. The segment at 349–405 (RTAIAAINIAVQMVEEKLISKEQALMRIDPESLNQLLHTRIDYSKKLTAIAEGLPAS) is linker 1. The central stretch occupies residues 406-503 (PGAATGIVVF…VIKQGDIITI (98 aa)). Phosphothreonine; by PDRP1 is present on T458. H460 functions as the Tele-phosphohistidine intermediate in the catalytic mechanism. A linker 2 region spans residues 504-538 (DGGSGKIFLGEMPLIQPTFSEESTLILDWADEISS). Residues 539-879 (LKVRANAETV…AAAQAKIKQG (341 aa)) are C-terminal. Positions 566, 622, 750, 771, 772, 773, and 774 each coordinate substrate. E750 contributes to the Mg(2+) binding site. A Mg(2+)-binding site is contributed by D774. C836 acts as the Proton donor in catalysis.

It belongs to the PEP-utilizing enzyme family. Homodimer. The cofactor is Mg(2+). Phosphorylation of Thr-458 in the dark inactivates the enzyme. Dephosphorylation upon light stimulation reactivates the enzyme.

It carries out the reaction pyruvate + phosphate + ATP = phosphoenolpyruvate + AMP + diphosphate + H(+). Activated by light-induced dephosphorylation. Inhibited by dark-induced phosphorylation. Both reactions are catalyzed by PDRP1. In terms of biological role, catalyzes the reversible phosphorylation of pyruvate and phosphate. The polypeptide is Pyruvate, phosphate dikinase (ppdK) (Rickettsia typhi (strain ATCC VR-144 / Wilmington)).